The chain runs to 123 residues: Large ribosomal subunit protein bL12 (123 aa).

It belongs to the bacterial ribosomal protein bL12 family. Homodimer. Part of the ribosomal stalk of the 50S ribosomal subunit. Forms a multimeric L10(L12)X complex, where L10 forms an elongated spine to which 2 to 4 L12 dimers bind in a sequential fashion. Binds GTP-bound translation factors.

Its function is as follows. Forms part of the ribosomal stalk which helps the ribosome interact with GTP-bound translation factors. Is thus essential for accurate translation. The sequence is that of Large ribosomal subunit protein bL12 from Acinetobacter baumannii (strain AB307-0294).